A 285-amino-acid chain; its full sequence is Formamidopyrimidine-DNA glycosylase (285 aa).

Residue Pro2 is the Schiff-base intermediate with DNA of the active site. The active-site Proton donor is the Glu3. Lys61 acts as the Proton donor; for beta-elimination activity in catalysis. DNA-binding residues include His102, Arg121, and Lys163. The FPG-type zinc-finger motif lies at 249–283 (NAYGQAGKPCARCGTPIARETFMNRGSHFCNRCQK). The Proton donor; for delta-elimination activity role is filled by Arg273.

The protein belongs to the FPG family. Monomer. Zn(2+) serves as cofactor.

It carries out the reaction Hydrolysis of DNA containing ring-opened 7-methylguanine residues, releasing 2,6-diamino-4-hydroxy-5-(N-methyl)formamidopyrimidine.. The enzyme catalyses 2'-deoxyribonucleotide-(2'-deoxyribose 5'-phosphate)-2'-deoxyribonucleotide-DNA = a 3'-end 2'-deoxyribonucleotide-(2,3-dehydro-2,3-deoxyribose 5'-phosphate)-DNA + a 5'-end 5'-phospho-2'-deoxyribonucleoside-DNA + H(+). Involved in base excision repair of DNA damaged by oxidation or by mutagenic agents. Acts as a DNA glycosylase that recognizes and removes damaged bases. Has a preference for oxidized purines, such as 7,8-dihydro-8-oxoguanine (8-oxoG). Has AP (apurinic/apyrimidinic) lyase activity and introduces nicks in the DNA strand. Cleaves the DNA backbone by beta-delta elimination to generate a single-strand break at the site of the removed base with both 3'- and 5'-phosphates. The protein is Formamidopyrimidine-DNA glycosylase of Corynebacterium efficiens (strain DSM 44549 / YS-314 / AJ 12310 / JCM 11189 / NBRC 100395).